The primary structure comprises 118 residues: ATP synthase subunit c (118 aa).

Transmembrane regions (helical) follow at residues Ala34–Gly54 and Met88–Ala108.

This sequence belongs to the ATPase C chain family. In terms of assembly, F-type ATPases have 2 components, F(1) - the catalytic core - and F(0) - the membrane proton channel. F(1) has five subunits: alpha(3), beta(3), gamma(1), delta(1), epsilon(1). F(0) has three main subunits: a(1), b(2) and c(10-14). The alpha and beta chains form an alternating ring which encloses part of the gamma chain. F(1) is attached to F(0) by a central stalk formed by the gamma and epsilon chains, while a peripheral stalk is formed by the delta and b chains.

It is found in the cell inner membrane. F(1)F(0) ATP synthase produces ATP from ADP in the presence of a proton or sodium gradient. F-type ATPases consist of two structural domains, F(1) containing the extramembraneous catalytic core and F(0) containing the membrane proton channel, linked together by a central stalk and a peripheral stalk. During catalysis, ATP synthesis in the catalytic domain of F(1) is coupled via a rotary mechanism of the central stalk subunits to proton translocation. Its function is as follows. Key component of the F(0) channel; it plays a direct role in translocation across the membrane. A homomeric c-ring of between 10-14 subunits forms the central stalk rotor element with the F(1) delta and epsilon subunits. This chain is ATP synthase subunit c, found in Syntrophus aciditrophicus (strain SB).